The sequence spans 331 residues: Probable tRNA pseudouridine synthase B (331 aa).

The active-site Nucleophile is the D66. A PUA domain is found at 233-307 (INKIIVKDSA…NEEDNREKYK (75 aa)).

This sequence belongs to the pseudouridine synthase TruB family. Type 2 subfamily.

The catalysed reaction is uridine(55) in tRNA = pseudouridine(55) in tRNA. In terms of biological role, could be responsible for synthesis of pseudouridine from uracil-55 in the psi GC loop of transfer RNAs. This chain is Probable tRNA pseudouridine synthase B, found in Methanococcus aeolicus (strain ATCC BAA-1280 / DSM 17508 / OCM 812 / Nankai-3).